Here is a 73-residue protein sequence, read N- to C-terminus: UPF0154 protein LJ_1506 (73 aa).

A helical transmembrane segment spans residues 3 to 23 (LGLAIFLIIIALLIGLVGGFY).

It belongs to the UPF0154 family.

The protein resides in the cell membrane. This chain is UPF0154 protein LJ_1506, found in Lactobacillus johnsonii (strain CNCM I-12250 / La1 / NCC 533).